The sequence spans 715 residues: Glycine--tRNA ligase beta subunit (715 aa).

The protein belongs to the class-II aminoacyl-tRNA synthetase family. Tetramer of two alpha and two beta subunits.

It localises to the cytoplasm. The catalysed reaction is tRNA(Gly) + glycine + ATP = glycyl-tRNA(Gly) + AMP + diphosphate. The protein is Glycine--tRNA ligase beta subunit of Nitrosomonas eutropha (strain DSM 101675 / C91 / Nm57).